The chain runs to 260 residues: Adenosylcobinamide-GDP ribazoletransferase (260 aa).

The next 7 helical transmembrane spans lie at 42-62 (PLAGGILGLLAGVALLIANAI), 64-84 (LPPLAAALIAIGALAAMTGAL), 117-137 (FAALTLVIWTSVKASLLMAII), 144-164 (YALLALIGTEAASRAGMLAFW), 192-212 (GLGLALLAIGFLPSGGMVALI), 214-234 (ALVLMTVVLFGFARLCMAKIG), and 240-260 (TLGAAQQIGSLAALIGLVMAL).

It belongs to the CobS family. The cofactor is Mg(2+).

Its subcellular location is the cell inner membrane. It catalyses the reaction alpha-ribazole + adenosylcob(III)inamide-GDP = adenosylcob(III)alamin + GMP + H(+). The enzyme catalyses alpha-ribazole 5'-phosphate + adenosylcob(III)inamide-GDP = adenosylcob(III)alamin 5'-phosphate + GMP + H(+). The protein operates within cofactor biosynthesis; adenosylcobalamin biosynthesis; adenosylcobalamin from cob(II)yrinate a,c-diamide: step 7/7. Functionally, joins adenosylcobinamide-GDP and alpha-ribazole to generate adenosylcobalamin (Ado-cobalamin). Also synthesizes adenosylcobalamin 5'-phosphate from adenosylcobinamide-GDP and alpha-ribazole 5'-phosphate. In Brucella ovis (strain ATCC 25840 / 63/290 / NCTC 10512), this protein is Adenosylcobinamide-GDP ribazoletransferase.